A 301-amino-acid polypeptide reads, in one-letter code: Acetylglutamate kinase (301 aa).

Substrate contacts are provided by residues G72–G73, R94, and N199.

The protein belongs to the acetylglutamate kinase family. ArgB subfamily.

It is found in the cytoplasm. It catalyses the reaction N-acetyl-L-glutamate + ATP = N-acetyl-L-glutamyl 5-phosphate + ADP. It functions in the pathway amino-acid biosynthesis; L-arginine biosynthesis; N(2)-acetyl-L-ornithine from L-glutamate: step 2/4. Its function is as follows. Catalyzes the ATP-dependent phosphorylation of N-acetyl-L-glutamate. The sequence is that of Acetylglutamate kinase from Bartonella quintana (strain Toulouse) (Rochalimaea quintana).